A 199-amino-acid chain; its full sequence is uncharacterized protein (199 aa).

This sequence to U.parvum UU376.

This is an uncharacterized protein from Ureaplasma parvum serovar 3 (strain ATCC 700970).